The primary structure comprises 340 residues: GTP 3',8-cyclase (340 aa).

The Radical SAM core domain occupies Arg20–Lys246. Arg29 provides a ligand contact to GTP. 2 residues coordinate [4Fe-4S] cluster: Cys36 and Cys40. An S-adenosyl-L-methionine-binding site is contributed by Tyr42. Cys43 serves as a coordination point for [4Fe-4S] cluster. Arg79 provides a ligand contact to GTP. Residue Gly83 participates in S-adenosyl-L-methionine binding. Position 110 (Thr110) interacts with GTP. Residue Ser134 participates in S-adenosyl-L-methionine binding. Lys171 contacts GTP. Residue Met205 coordinates S-adenosyl-L-methionine. Positions 268 and 271 each coordinate [4Fe-4S] cluster. Arg273–Arg275 lines the GTP pocket. Cys285 lines the [4Fe-4S] cluster pocket.

It belongs to the radical SAM superfamily. MoaA family. Monomer and homodimer. It depends on [4Fe-4S] cluster as a cofactor.

It carries out the reaction GTP + AH2 + S-adenosyl-L-methionine = (8S)-3',8-cyclo-7,8-dihydroguanosine 5'-triphosphate + 5'-deoxyadenosine + L-methionine + A + H(+). It participates in cofactor biosynthesis; molybdopterin biosynthesis. Its function is as follows. Catalyzes the cyclization of GTP to (8S)-3',8-cyclo-7,8-dihydroguanosine 5'-triphosphate. This chain is GTP 3',8-cyclase, found in Actinobacillus pleuropneumoniae serotype 5b (strain L20).